We begin with the raw amino-acid sequence, 91 residues long: Small ribosomal subunit protein uS17 (91 aa).

Belongs to the universal ribosomal protein uS17 family. As to quaternary structure, part of the 30S ribosomal subunit.

In terms of biological role, one of the primary rRNA binding proteins, it binds specifically to the 5'-end of 16S ribosomal RNA. This chain is Small ribosomal subunit protein uS17, found in Malacoplasma penetrans (strain HF-2) (Mycoplasma penetrans).